The chain runs to 102 residues: Large ribosomal subunit protein uL24 (102 aa).

Positions 44 to 65 (HAKPSQDNPQGGILNQEAPIHS) are disordered.

The protein belongs to the universal ribosomal protein uL24 family. In terms of assembly, part of the 50S ribosomal subunit.

Functionally, one of two assembly initiator proteins, it binds directly to the 5'-end of the 23S rRNA, where it nucleates assembly of the 50S subunit. In terms of biological role, one of the proteins that surrounds the polypeptide exit tunnel on the outside of the subunit. This is Large ribosomal subunit protein uL24 from Shouchella clausii (strain KSM-K16) (Alkalihalobacillus clausii).